A 302-amino-acid polypeptide reads, in one-letter code: Urease accessory protein UreD (302 aa).

This sequence belongs to the UreD family. As to quaternary structure, ureD, UreF and UreG form a complex that acts as a GTP-hydrolysis-dependent molecular chaperone, activating the urease apoprotein by helping to assemble the nickel containing metallocenter of UreC. The UreE protein probably delivers the nickel.

It is found in the cytoplasm. Functionally, required for maturation of urease via the functional incorporation of the urease nickel metallocenter. In Pseudoalteromonas translucida (strain TAC 125), this protein is Urease accessory protein UreD.